Here is a 579-residue protein sequence, read N- to C-terminus: Probable cytochrome c biosynthesis protein (579 aa).

This sequence belongs to the CcmF/CycK/Ccl1/NrfE/CcsA family.

Its subcellular location is the mitochondrion. Its function is as follows. Could be involved in assembly and maturation of cytochromes c. May play a role in guidance of apocytochromes and heme groups for the covalent linkage introduced by the cytochrome-c-heme lyase. In Daucus carota (Wild carrot), this protein is Probable cytochrome c biosynthesis protein.